Reading from the N-terminus, the 501-residue chain is Lysine--tRNA ligase (501 aa).

Glu404 and Glu411 together coordinate Mg(2+).

The protein belongs to the class-II aminoacyl-tRNA synthetase family. Homodimer. It depends on Mg(2+) as a cofactor.

Its subcellular location is the cytoplasm. It carries out the reaction tRNA(Lys) + L-lysine + ATP = L-lysyl-tRNA(Lys) + AMP + diphosphate. In Campylobacter jejuni (strain RM1221), this protein is Lysine--tRNA ligase.